We begin with the raw amino-acid sequence, 76 residues long: UPF0291 protein GK1331 (76 aa).

Residues 57 to 76 are disordered; the sequence is PSGNDVTPKKLKESQRRRFH. The segment covering 63–76 has biased composition (basic and acidic residues); that stretch reads TPKKLKESQRRRFH.

Belongs to the UPF0291 family.

The protein resides in the cytoplasm. This is UPF0291 protein GK1331 from Geobacillus kaustophilus (strain HTA426).